The following is a 303-amino-acid chain: Mesenteric estrogen-dependent adipogenesis protein (303 aa).

It localises to the cytoplasm. Functionally, involved in processes that promote adipocyte differentiation, lipid accumulation, and glucose uptake in mature adipocytes. In Bos taurus (Bovine), this protein is Mesenteric estrogen-dependent adipogenesis protein (MEDAG).